We begin with the raw amino-acid sequence, 413 residues long: Tyrosine--tRNA ligase (413 aa).

Residue Tyr34 participates in L-tyrosine binding. A 'HIGH' region motif is present at residues Cys39–Asn48. Tyr171 and Gln175 together coordinate L-tyrosine. Residues Lys231–Thr235 carry the 'KMSKS' region motif. ATP is bound at residue Lys234. An S4 RNA-binding domain is found at Ile346 to Ile411.

Belongs to the class-I aminoacyl-tRNA synthetase family. TyrS type 1 subfamily. As to quaternary structure, homodimer.

The protein resides in the cytoplasm. It catalyses the reaction tRNA(Tyr) + L-tyrosine + ATP = L-tyrosyl-tRNA(Tyr) + AMP + diphosphate + H(+). In terms of biological role, catalyzes the attachment of tyrosine to tRNA(Tyr) in a two-step reaction: tyrosine is first activated by ATP to form Tyr-AMP and then transferred to the acceptor end of tRNA(Tyr). The protein is Tyrosine--tRNA ligase of Orientia tsutsugamushi (strain Ikeda) (Rickettsia tsutsugamushi).